The chain runs to 117 residues: Large ribosomal subunit protein bL20 (117 aa).

The protein belongs to the bacterial ribosomal protein bL20 family.

Binds directly to 23S ribosomal RNA and is necessary for the in vitro assembly process of the 50S ribosomal subunit. It is not involved in the protein synthesizing functions of that subunit. The polypeptide is Large ribosomal subunit protein bL20 (Brachyspira hyodysenteriae (strain ATCC 49526 / WA1)).